The chain runs to 531 residues: uncharacterized protein (531 aa).

The signal sequence occupies residues Met1 to Ala22. Cys23 is lipidated: N-palmitoyl cysteine. Residue Cys23 is the site of S-diacylglycerol cysteine attachment. The segment at Glu31–Pro51 is disordered. The span at Pro40 to Pro51 shows a compositional bias: low complexity.

Belongs to the MG067/MG068/MG395 family.

The protein resides in the cell membrane. This is an uncharacterized protein from Mycoplasma pneumoniae (strain ATCC 29342 / M129 / Subtype 1) (Mycoplasmoides pneumoniae).